The following is a 312-amino-acid chain: Malate dehydrogenase (312 aa).

NAD(+) is bound by residues 7–13 (GAAGGIG) and aspartate 34. Substrate-binding residues include arginine 81 and arginine 87. Residues asparagine 94 and 117–119 (ITN) each bind NAD(+). Residues asparagine 119 and arginine 153 each coordinate substrate. The active-site Proton acceptor is histidine 177. Residue methionine 227 participates in NAD(+) binding.

It belongs to the LDH/MDH superfamily. MDH type 1 family. As to quaternary structure, homodimer.

It catalyses the reaction (S)-malate + NAD(+) = oxaloacetate + NADH + H(+). Functionally, catalyzes the reversible oxidation of malate to oxaloacetate. This is Malate dehydrogenase from Escherichia coli (strain 55989 / EAEC).